We begin with the raw amino-acid sequence, 284 residues long: Bifunctional protein FolD (284 aa).

NADP(+) is bound by residues 165-167 (GRS), serine 190, and valine 231.

It belongs to the tetrahydrofolate dehydrogenase/cyclohydrolase family. In terms of assembly, homodimer.

The catalysed reaction is (6R)-5,10-methylene-5,6,7,8-tetrahydrofolate + NADP(+) = (6R)-5,10-methenyltetrahydrofolate + NADPH. It carries out the reaction (6R)-5,10-methenyltetrahydrofolate + H2O = (6R)-10-formyltetrahydrofolate + H(+). It functions in the pathway one-carbon metabolism; tetrahydrofolate interconversion. In terms of biological role, catalyzes the oxidation of 5,10-methylenetetrahydrofolate to 5,10-methenyltetrahydrofolate and then the hydrolysis of 5,10-methenyltetrahydrofolate to 10-formyltetrahydrofolate. The polypeptide is Bifunctional protein FolD (Geobacillus thermodenitrificans (strain NG80-2)).